A 297-amino-acid polypeptide reads, in one-letter code: Formamidopyrimidine-DNA glycosylase (297 aa).

P2 (schiff-base intermediate with DNA) is an active-site residue. E3 acts as the Proton donor in catalysis. The active-site Proton donor; for beta-elimination activity is K58. H106, R125, and R168 together coordinate DNA. The FPG-type zinc finger occupies 259 to 295 (RVYDREGLACTARGCRGRVRRIVQAGRSTFYCETCQP). The active-site Proton donor; for delta-elimination activity is the R285.

The protein belongs to the FPG family. In terms of assembly, monomer. It depends on Zn(2+) as a cofactor.

The enzyme catalyses Hydrolysis of DNA containing ring-opened 7-methylguanine residues, releasing 2,6-diamino-4-hydroxy-5-(N-methyl)formamidopyrimidine.. It carries out the reaction 2'-deoxyribonucleotide-(2'-deoxyribose 5'-phosphate)-2'-deoxyribonucleotide-DNA = a 3'-end 2'-deoxyribonucleotide-(2,3-dehydro-2,3-deoxyribose 5'-phosphate)-DNA + a 5'-end 5'-phospho-2'-deoxyribonucleoside-DNA + H(+). Involved in base excision repair of DNA damaged by oxidation or by mutagenic agents. Acts as a DNA glycosylase that recognizes and removes damaged bases. Has a preference for oxidized purines, such as 7,8-dihydro-8-oxoguanine (8-oxoG). Has AP (apurinic/apyrimidinic) lyase activity and introduces nicks in the DNA strand. Cleaves the DNA backbone by beta-delta elimination to generate a single-strand break at the site of the removed base with both 3'- and 5'-phosphates. The sequence is that of Formamidopyrimidine-DNA glycosylase from Methylobacterium sp. (strain 4-46).